The sequence spans 1099 residues: Contactin-5 (1099 aa).

The first 18 residues, 1 to 18, serve as a signal peptide directing secretion; the sequence is MASSWRLILFLSFTSCLS. 6 Ig-like C2-type domains span residues 99 to 190, 196 to 282, 300 to 385, 390 to 474, 480 to 569, and 571 to 660; these read PVFV…ATLQ, NFSG…RVLS, PKIE…GQLQ, PHWV…AELK, PSFE…VSVK, and PTRI…DSVS. A disulfide bridge links C123 with C173. N-linked (GlcNAc...) asparagine glycosylation is found at N138 and N196. Disulfide bonds link C217–C269 and C322–C369. 3 N-linked (GlcNAc...) asparagine glycosylation sites follow: N397, N449, and N540. 3 cysteine pairs are disulfide-bonded: C411–C458, C503–C551, and C593–C650. 4 consecutive Fibronectin type-III domains span residues 673–771, 776–873, 878–972, and 977–1067; these read PPGV…TNEA, APSN…SAEG, APTD…TKRH, and PPGN…SYAG. N779, N816, and N931 each carry an N-linked (GlcNAc...) asparagine glycan. Residues 958-983 form a disordered region; the sequence is YGPPSREVSATTKRHPPSEPPGNLRW. Residue N1002 is glycosylated (N-linked (GlcNAc...) asparagine). The GPI-anchor amidated serine moiety is linked to residue S1072. A propeptide spans 1073-1099 (removed in mature form); that stretch reads AQSTLHSLSKWSSVTLLLALMLPSSSW.

Belongs to the immunoglobulin superfamily. Contactin family. In terms of assembly, interacts with PTPRG. As to expression, specifically expressed in the nervous system. Expressed in cerebrum and cerebellum but at low level in spinal cord. In brain, it is expressed in highly restricted regions at postnatal day 7, such as the auditory pathway, including the cochlear nucleus, superior olive, inferior colliculus, medial geniculate nucleus and auditory cortex. Expressed in the accessory olfactory bulb, glomerular and mitral cell layers in the olfactory bulb, anterior thalamic nuclei, layers II-IV of the cerebral cortex, dentate gyrus of the hippocampus and external granule cells and Purkinje cells of the cerebellum. Also expressed in the piriform cortex, inferior olive and facial nucleus. Weakly or not expressed in other parts of the brain.

It localises to the cell membrane. Contactins mediate cell surface interactions during nervous system development. Has some neurite outgrowth-promoting activity in the cerebral cortical neurons but not in hippocampal neurons. Probably involved in neuronal activity in the auditory system. The sequence is that of Contactin-5 (Cntn5) from Rattus norvegicus (Rat).